The sequence spans 212 residues: 3,4-dihydroxy-2-butanone 4-phosphate synthase (212 aa).

D-ribulose 5-phosphate is bound by residues 37-38 (RE), aspartate 42, 150-154 (RRGHT), and glutamate 174. Residue glutamate 38 coordinates Mg(2+). Histidine 153 contacts Mg(2+).

The protein belongs to the DHBP synthase family. As to quaternary structure, homodimer. It depends on Mg(2+) as a cofactor. The cofactor is Mn(2+).

It catalyses the reaction D-ribulose 5-phosphate = (2S)-2-hydroxy-3-oxobutyl phosphate + formate + H(+). It participates in cofactor biosynthesis; riboflavin biosynthesis; 2-hydroxy-3-oxobutyl phosphate from D-ribulose 5-phosphate: step 1/1. In terms of biological role, catalyzes the conversion of D-ribulose 5-phosphate to formate and 3,4-dihydroxy-2-butanone 4-phosphate. This Shewanella halifaxensis (strain HAW-EB4) protein is 3,4-dihydroxy-2-butanone 4-phosphate synthase.